Consider the following 47-residue polypeptide: Gene 60 protein (47 aa).

The polypeptide is Gene 60 protein (60) (Mycobacterium phage L5 (Mycobacteriophage L5)).